Consider the following 117-residue polypeptide: Immunoglobulin lambda variable 10-54 (117 aa).

A signal peptide spans 1–21 (MPWALLLLTLLTHSAVSVVQA). Residues 20–43 (QAGLTQPPSVSKGLRQTATLTCTG) form a framework-1 region. Residues 22–117 (GLTQPPSVSK…CSALDSSLSA (96 aa)) form the Ig-like domain. Cysteine 41 and cysteine 108 are oxidised to a cystine. The tract at residues 44–52 (NSNIVGNQG) is complementarity-determining-1. Residues 53-69 (AAWLQQHQGHPPKLLSY) are framework-2. Positions 70–72 (RNN) are complementarity-determining-2. Positions 73-108 (NRPSGISERFSASRSGNTASLTITGLQPEDEADYYC) are framework-3. Residues 109-117 (SALDSSLSA) are complementarity-determining-3.

Immunoglobulins are composed of two identical heavy chains and two identical light chains; disulfide-linked.

Its subcellular location is the secreted. It is found in the cell membrane. In terms of biological role, v region of the variable domain of immunoglobulin light chains that participates in the antigen recognition. Immunoglobulins, also known as antibodies, are membrane-bound or secreted glycoproteins produced by B lymphocytes. In the recognition phase of humoral immunity, the membrane-bound immunoglobulins serve as receptors which, upon binding of a specific antigen, trigger the clonal expansion and differentiation of B lymphocytes into immunoglobulins-secreting plasma cells. Secreted immunoglobulins mediate the effector phase of humoral immunity, which results in the elimination of bound antigens. The antigen binding site is formed by the variable domain of one heavy chain, together with that of its associated light chain. Thus, each immunoglobulin has two antigen binding sites with remarkable affinity for a particular antigen. The variable domains are assembled by a process called V-(D)-J rearrangement and can then be subjected to somatic hypermutations which, after exposure to antigen and selection, allow affinity maturation for a particular antigen. This chain is Immunoglobulin lambda variable 10-54, found in Homo sapiens (Human).